The following is a 462-amino-acid chain: MTLPINNNIFTVSRLNKTVRQLLEMEMGRIWISAEISNFTQPASGHWYFTLKDTHAQIRAAMFRGQNTKVTFRPQHGQQVLVRATITLYEPRGDYQLIVESMQPAGDGLLQQQFELLKQKLSAEGLFDALHKKPLPTPAKQIGVITSSTGAALHDILNILRRRDPSLPIIIYPTAVQGAEAPMQIVHAIELANRRKECDVLIVGRGGGSLEDLWAFNDERVARAIFASDIPIVSAVGHETDVTIADFIADLRAPTPSAAAELISRNKLELLRQLQSQQQRLEMAMDYYLAKKLRALTQLHHRLQQQHPHLRLARQQNVLATTKQRLVTSFQRLLQTKQNQHTQLQKRLNYQEPSPQIQALLRQQQQLIYRMRESISQQLARQREQFAISCSRLESVSPLATLSRGYSISEVASGDVLKNTKQVKKGDTLKTRVEDGWITSEVINTQKIPAKRKPAPKSKSSI.

Belongs to the XseA family. Heterooligomer composed of large and small subunits.

Its subcellular location is the cytoplasm. It carries out the reaction Exonucleolytic cleavage in either 5'- to 3'- or 3'- to 5'-direction to yield nucleoside 5'-phosphates.. Functionally, bidirectionally degrades single-stranded DNA into large acid-insoluble oligonucleotides, which are then degraded further into small acid-soluble oligonucleotides. The chain is Exodeoxyribonuclease 7 large subunit from Proteus mirabilis (strain HI4320).